A 437-amino-acid chain; its full sequence is MESVKNAKRSYEKEYRQKVCSPVEAAAVVKSGDCLCFPISVGEPTLFVRALAARRHELEGVVINQQHHLCPDYFTEDSAPHIKVNAWFTSHVSREAVQKGWADFVPNYFHEVPRLLRDYWPVDVAGTVVSPMDEHGYFTCSLSVAYTMEAIKKAKKVVVQVNPQAPRTHGNCHIHISEVDHIIECDEPLASLTIPPITPVEEAIGGYISELVEDGSCLQLGWGGIPNSVCKALLHKKDLGIHTELLSDGMVDLMLSGAVNNSRKQTHTGKTVATFALGTSRLYEFMNENPRIEMHPVDYVNYPHNIGKNDNVVSINATLEVDLLGQCCSESFGHLQYSGTGGQADFVRGSNISNGGKGFITTASTAKNGTISRIVPTLAPGASVTTGKNDVDYVVTEFGVAKLRGQTARQRAINLINIAHPDFRGELTEAARRMNRI.

221-225 (GWGGI) lines the CoA pocket. Glutamate 244 (5-glutamyl coenzyme A thioester intermediate) is an active-site residue. CoA is bound by residues leucine 319, glycine 342, and lysine 367.

This sequence belongs to the acetyl-CoA hydrolase/transferase family. As to quaternary structure, homodimer.

It carries out the reaction cyclohexane-1-carboxylate + succinyl-CoA = cyclohexane-1-carbonyl-CoA + succinate. It catalyses the reaction cyclohexane-1-carboxylate + butanoyl-CoA = cyclohexane-1-carbonyl-CoA + butanoate. Acyl-CoA transferase involved in the anaerobic degradation of cyclohexane carboxylic acid (CHC). Catalyzes the activation of CHC to cyclohexane-1-carbonyl-CoA (CHCoA). Benzoic acid and cyclohex-1-ene-1-carboxylic acid can also be used as substrates, but with lower specific activity. Shows highest activity with succinyl-CoA and butanoyl-coA as a CoA donor, and lower activity with crotonyl-CoA, acetyl-CoA, glutaryl-CoA, CH1eneCoA, propionyl-CoA and acetoacetyl-CoA. In vitro, the enzyme can use butanoyl-coA as a CoA donor with greater efficiency than succinyl-CoA. However, succinyl-CoA is the most abundant CoA ester in exponentially grown cells, whereas butanoyl-coA is hardly detectable, indicating that succinyl-CoA is the natural CoA donor for CHC activation. The protein is Succinyl-CoA:cyclohexane-1-carboxylate CoA transferase of Geobacter metallireducens (strain ATCC 53774 / DSM 7210 / GS-15).